Reading from the N-terminus, the 475-residue chain is MKHAIRHIHFVGLGGAGMCGIAEVLFNLGYEISGSDLADSATLRRLAALGIATRVGHAAAHIEGADAVVTSTAVQSDNPEVIAARERKIPVVPRALMLAELMRLKRGIAIAGTHGKTTTTSLVTSVLAEAGLDPTFVIGGRLNSAGANAKLGQGEYIVVEADESDASFLNLLPVMAVVTNIDADHMETYGHDFGRLKSAFVDFLHRMPFYGTAILCTDNPAIREILPDVTCPVTSYGFSEDAQVRAVDVRADAGRMRFRVQRRNGVTLPDLDVVLNLAGEHNVLNALSAIAVAVELNIPDEALLRALAQFKGVGRRFQRYGELPAQGGGTFTLIEDYGHHPVEMTATLAAARGAFPGRRLVLAFQPHRYSRTRDCFEDFVKVMGSADAVLLTEVYAAGEAPIVAADGRSLARAVRVAGQVEPVFVDDIGELPRRIADNARGGDVVLCMGAGSIGAVPAKVVEMLRTDVPAMQEDR.

112–118 (GTHGKTT) contacts ATP.

The protein belongs to the MurCDEF family.

Its subcellular location is the cytoplasm. The catalysed reaction is UDP-N-acetyl-alpha-D-muramate + L-alanine + ATP = UDP-N-acetyl-alpha-D-muramoyl-L-alanine + ADP + phosphate + H(+). The protein operates within cell wall biogenesis; peptidoglycan biosynthesis. Cell wall formation. The protein is UDP-N-acetylmuramate--L-alanine ligase of Paracidovorax citrulli (strain AAC00-1) (Acidovorax citrulli).